A 513-amino-acid chain; its full sequence is Glucose-6-phosphate 1-dehydrogenase 2 (513 aa).

N-acetylalanine is present on alanine 2. A Phosphoserine modification is found at serine 8. Position 10 is a phosphothreonine (threonine 10). NADP(+) is bound by residues 38–45 (GASGDLAK) and arginine 72. At lysine 89 the chain carries N6-acetyllysine. Residues tyrosine 147 and lysine 171 each contribute to the NADP(+) site. Residues lysine 171, 201-205 (HYLDK), glutamate 239, and aspartate 258 contribute to the D-glucose 6-phosphate site. At lysine 171 the chain carries N6-(2-hydroxyisobutyryl)lysine; alternate. Lysine 171 carries the N6-acetyllysine; alternate modification. The Proton acceptor role is filled by histidine 263. Arginine 357 is an NADP(+) binding site. Residues lysine 360 and arginine 365 each coordinate D-glucose 6-phosphate. The NADP(+) site is built by lysine 366, arginine 370, and arginine 393. Residue glutamine 395 participates in D-glucose 6-phosphate binding. An NADP(+)-binding site is contributed by 421–423 (DLT). N6-acetyllysine is present on lysine 432. Residues arginine 487 and tyrosine 503 each coordinate NADP(+). Tyrosine 503 is subject to Phosphotyrosine.

This sequence belongs to the glucose-6-phosphate dehydrogenase family. In terms of assembly, homotetramer; dimer of dimers. Interacts with SIRT2; the interaction is enhanced by H(2)O(2) treatment. Acetylated by ELP3; acetylation inhibits its homodimerization and enzyme activity. Deacetylated by SIRT2; deacetylation stimulates its enzyme activity. As to expression, testis.

It localises to the cytoplasm. The protein localises to the cytosol. It is found in the membrane. It carries out the reaction D-glucose 6-phosphate + NADP(+) = 6-phospho-D-glucono-1,5-lactone + NADPH + H(+). It functions in the pathway carbohydrate degradation; pentose phosphate pathway; D-ribulose 5-phosphate from D-glucose 6-phosphate (oxidative stage): step 1/3. In terms of biological role, catalyzes the rate-limiting step of the oxidative pentose-phosphate pathway, which represents a route for the dissimilation of carbohydrates besides glycolysis. The main function of this enzyme is to provide reducing power (NADPH) and pentose phosphates for fatty acid and nucleic acid synthesis. The polypeptide is Glucose-6-phosphate 1-dehydrogenase 2 (G6pd2) (Mus musculus (Mouse)).